Consider the following 597-residue polypeptide: Cytosolic phospholipase A2 gamma (597 aa).

The PLA2c domain maps to 1 to 597 (MELSSGVCPA…FKKSHNISKD (597 aa)). The Nucleophile role is filled by serine 83. The Proton acceptor role is filled by aspartate 417. Residues 576 to 597 (RVKDPQGSQTVEFKKSHNISKD) form a disordered region. Positions 587 to 597 (EFKKSHNISKD) are enriched in basic and acidic residues.

As to expression, highly expressed in ovary, where it localizes to oocytes in preantral and antral stage follicles (at protein level). Not detected in other tissues tested.

It localises to the nucleus. It is found in the nucleoplasm. Its subcellular location is the nucleus envelope. The protein localises to the cytoplasm. The protein resides in the cell cortex. It localises to the cytoskeleton. It is found in the spindle. The catalysed reaction is a 1,2-diacyl-sn-glycero-3-phosphocholine + H2O = a 1-acyl-sn-glycero-3-phosphocholine + a fatty acid + H(+). It carries out the reaction a 1-O-alkyl-2-acyl-sn-glycero-3-phosphocholine + H2O = a 1-O-alkyl-sn-glycero-3-phosphocholine + a fatty acid + H(+). It catalyses the reaction 1,2-dihexadecanoyl-sn-glycero-3-phosphocholine + H2O = 1-hexadecanoyl-sn-glycero-3-phosphocholine + hexadecanoate + H(+). The enzyme catalyses 1-hexadecanoyl-2-(9Z-octadecenoyl)-sn-glycero-3-phosphocholine + H2O = 1-hexadecanoyl-sn-glycero-3-phosphocholine + (9Z)-octadecenoate + H(+). The catalysed reaction is 1-hexadecanoyl-2-(9Z,12Z-octadecadienoyl)-sn-glycero-3-phosphocholine + H2O = (9Z,12Z)-octadecadienoate + 1-hexadecanoyl-sn-glycero-3-phosphocholine + H(+). It carries out the reaction 1-hexadecanoyl-2-(5Z,8Z,11Z,14Z-eicosatetraenoyl)-sn-glycero-3-phosphocholine + H2O = 1-hexadecanoyl-sn-glycero-3-phosphocholine + (5Z,8Z,11Z,14Z)-eicosatetraenoate + H(+). It catalyses the reaction 1-O-hexadecyl-2-(5Z,8Z,11Z,14Z)-eicosatetraenoyl-sn-glycero-3-phosphocholine + H2O = 1-O-hexadecyl-sn-glycero-3-phosphocholine + (5Z,8Z,11Z,14Z)-eicosatetraenoate + H(+). The enzyme catalyses 1-hexadecanoyl-2-(5Z,8Z,11Z,14Z-eicosatetraenoyl)-sn-glycero-3-phosphocholine + H2O = 2-(5Z,8Z,11Z,14Z)-eicosatetraenoyl-sn-glycero-3-phosphocholine + hexadecanoate + H(+). The catalysed reaction is a 1-acyl-sn-glycero-3-phosphocholine + H2O = sn-glycerol 3-phosphocholine + a fatty acid + H(+). It carries out the reaction 1-hexadecanoyl-sn-glycero-3-phosphocholine + H2O = sn-glycerol 3-phosphocholine + hexadecanoate + H(+). It catalyses the reaction 2 1-hexadecanoyl-sn-glycero-3-phosphocholine = 1,2-dihexadecanoyl-sn-glycero-3-phosphocholine + sn-glycerol 3-phosphocholine. The enzyme catalyses 1-hexadecanoyl-sn-glycero-3-phosphoethanolamine + 1-hexadecanoyl-sn-glycero-3-phosphocholine = 1,2-dihexadecanoyl-sn-glycero-3-phosphoethanolamine + sn-glycerol 3-phosphocholine. The catalysed reaction is 1-hexadecanoyl-sn-glycero-3-phosphoethanolamine + 1-hexadecanoyl-sn-glycero-3-phosphocholine = sn-glycero-3-phosphoethanolamine + 1,2-dihexadecanoyl-sn-glycero-3-phosphocholine. It carries out the reaction 2 1-hexadecanoyl-sn-glycero-3-phosphoethanolamine = 1,2-dihexadecanoyl-sn-glycero-3-phosphoethanolamine + sn-glycero-3-phosphoethanolamine. It catalyses the reaction 1-O-hexadecyl-sn-glycero-3-phosphocholine + 1-hexadecanoyl-sn-glycero-3-phosphocholine = 1-O-hexadecyl-2-hexadecanoyl-sn-glycero-3-phosphocholine + sn-glycerol 3-phosphocholine. The enzyme catalyses a 1-O-(1Z-alkenyl)-sn-glycero-3-phosphoethanolamine + 1-hexadecanoyl-sn-glycero-3-phosphocholine = 1-O-(1Z)-alkenyl-2-hexadecanoyl-sn-glycero-3-phosphoethanolamine + sn-glycerol 3-phosphocholine. The catalysed reaction is 1-O-hexadecyl-sn-glycero-3-phosphocholine + 1-hexadecanoyl-sn-glycero-3-phosphoethanolamine = 1-O-hexadecyl-2-hexadecanoyl-sn-glycero-3-phosphocholine + sn-glycero-3-phosphoethanolamine. It carries out the reaction 1-octadecanoyl-2-(5Z,8Z,11Z,14Z)-eicosatetraenoyl-sn-glycero-3-phosphoethanolamine + 1-hexadecanoyl-sn-glycero-3-phosphocholine = 1-octadecanoyl-sn-glycero-3-phosphoethanolamine + 1-hexadecanoyl-2-(5Z,8Z,11Z,14Z-eicosatetraenoyl)-sn-glycero-3-phosphocholine. It catalyses the reaction 1-octadecanoyl-2-(5Z,8Z,11Z,14Z)-eicosatetraenoyl-sn-glycero-3-phosphoethanolamine + 1-O-hexadecyl-sn-glycero-3-phosphocholine = 1-octadecanoyl-sn-glycero-3-phosphoethanolamine + 1-O-hexadecyl-2-(5Z,8Z,11Z,14Z)-eicosatetraenoyl-sn-glycero-3-phosphocholine. The enzyme catalyses 1-hexadecanoyl-2-(9Z,12Z-octadecadienoyl)-sn-glycero-3-phosphocholine + a 1-O-(1Z-alkenyl)-sn-glycero-3-phosphoethanolamine = 1-O-(1Z-alkenyl)-2-(9Z,12Z-octadecadienoyl)-sn-glycero-3-phosphoethanolamine + 1-hexadecanoyl-sn-glycero-3-phosphocholine. The catalysed reaction is 1-hexadecanoyl-2-(5Z,8Z,11Z,14Z-eicosatetraenoyl)-sn-glycero-3-phosphocholine + a 1-O-(1Z-alkenyl)-sn-glycero-3-phosphoethanolamine = 1-O-(1Z)-alkenyl-2-(5Z,8Z,11Z,14Z)-eicosatetraenoyl-sn-glycero-3-phosphoethanolamine + 1-hexadecanoyl-sn-glycero-3-phosphocholine. Calcium-independent phospholipase, lysophospholipase and O-acyltransferase involved in phospholipid remodeling. Preferentially hydrolyzes the ester bond of the fatty acyl group attached at sn-2 position of phospholipids with choline and ethanolamine head groups, producing lysophospholipids that are used in deacylation-reacylation cycles. Transfers the sn-1 fatty acyl from one lysophospholipid molecule to the sn-2 position of another lysophospholipid to form diacyl, alkylacyl and alkenylacyl glycerophospholipids. Cleaves ester bonds but not alkyl or alkenyl ether bonds at the sn-1 position of lysophospholipids. Catalyzes sn-2 fatty acyl transfer from phospholipids to the sn-2 position of 1-O-alkyl or 1-O-alkenyl lysophospholipids with lower efficiency. The protein is Cytosolic phospholipase A2 gamma of Mus musculus (Mouse).